The following is a 188-amino-acid chain: Pyridoxal 5'-phosphate synthase subunit PdxT (188 aa).

Residue 46–48 (GES) participates in L-glutamine binding. Catalysis depends on Cys78, which acts as the Nucleophile. L-glutamine contacts are provided by residues Arg105 and 133–134 (IR). Active-site charge relay system residues include His169 and Glu171.

The protein belongs to the glutaminase PdxT/SNO family. In the presence of PdxS, forms a dodecamer of heterodimers. Only shows activity in the heterodimer.

The catalysed reaction is aldehydo-D-ribose 5-phosphate + D-glyceraldehyde 3-phosphate + L-glutamine = pyridoxal 5'-phosphate + L-glutamate + phosphate + 3 H2O + H(+). It catalyses the reaction L-glutamine + H2O = L-glutamate + NH4(+). The protein operates within cofactor biosynthesis; pyridoxal 5'-phosphate biosynthesis. Its function is as follows. Catalyzes the hydrolysis of glutamine to glutamate and ammonia as part of the biosynthesis of pyridoxal 5'-phosphate. The resulting ammonia molecule is channeled to the active site of PdxS. This Thermosipho africanus (strain TCF52B) protein is Pyridoxal 5'-phosphate synthase subunit PdxT.